A 500-amino-acid chain; its full sequence is Cytochrome P450 71B36 (500 aa).

Residues 1 to 21 form a helical membrane-spanning segment; it reads MATILFLSLLFLSCILLAAFT. Cys440 is a heme binding site.

It belongs to the cytochrome P450 family. Heme serves as cofactor.

Its subcellular location is the membrane. This chain is Cytochrome P450 71B36 (CYP71B36), found in Arabidopsis thaliana (Mouse-ear cress).